We begin with the raw amino-acid sequence, 497 residues long: Serine hydroxymethyltransferase (497 aa).

(6S)-5,6,7,8-tetrahydrofolate contacts are provided by residues Leu-176 and 180–182 (GHL). Lys-289 is modified (N6-(pyridoxal phosphate)lysine).

This sequence belongs to the SHMT family. As to quaternary structure, homodimer. The cofactor is pyridoxal 5'-phosphate.

The protein resides in the cytoplasm. The catalysed reaction is (6R)-5,10-methylene-5,6,7,8-tetrahydrofolate + glycine + H2O = (6S)-5,6,7,8-tetrahydrofolate + L-serine. It participates in one-carbon metabolism; tetrahydrofolate interconversion. It functions in the pathway amino-acid biosynthesis; glycine biosynthesis; glycine from L-serine: step 1/1. In terms of biological role, catalyzes the reversible interconversion of serine and glycine with tetrahydrofolate (THF) serving as the one-carbon carrier. This reaction serves as the major source of one-carbon groups required for the biosynthesis of purines, thymidylate, methionine, and other important biomolecules. Also exhibits THF-independent aldolase activity toward beta-hydroxyamino acids, producing glycine and aldehydes, via a retro-aldol mechanism. The polypeptide is Serine hydroxymethyltransferase (Chlamydia caviae (strain ATCC VR-813 / DSM 19441 / 03DC25 / GPIC) (Chlamydophila caviae)).